The sequence spans 189 residues: Elongation factor P (189 aa).

This sequence belongs to the elongation factor P family.

The protein localises to the cytoplasm. The protein operates within protein biosynthesis; polypeptide chain elongation. In terms of biological role, involved in peptide bond synthesis. Stimulates efficient translation and peptide-bond synthesis on native or reconstituted 70S ribosomes in vitro. Probably functions indirectly by altering the affinity of the ribosome for aminoacyl-tRNA, thus increasing their reactivity as acceptors for peptidyl transferase. The chain is Elongation factor P from Xanthobacter autotrophicus (strain ATCC BAA-1158 / Py2).